The chain runs to 65 residues: Small ribosomal subunit protein bS21 (65 aa).

This sequence belongs to the bacterial ribosomal protein bS21 family.

The chain is Small ribosomal subunit protein bS21 from Chlorobium limicola (strain DSM 245 / NBRC 103803 / 6330).